We begin with the raw amino-acid sequence, 338 residues long: tRNA N6-adenosine threonylcarbamoyltransferase (338 aa).

His114 and His118 together coordinate Fe cation. Substrate-binding positions include 137 to 141, Asp170, Gly183, Asp187, and Asn277; that span reads IVSGG. Asp305 lines the Fe cation pocket.

Belongs to the KAE1 / TsaD family. Fe(2+) serves as cofactor.

The protein localises to the cytoplasm. It catalyses the reaction L-threonylcarbamoyladenylate + adenosine(37) in tRNA = N(6)-L-threonylcarbamoyladenosine(37) in tRNA + AMP + H(+). Required for the formation of a threonylcarbamoyl group on adenosine at position 37 (t(6)A37) in tRNAs that read codons beginning with adenine. Is involved in the transfer of the threonylcarbamoyl moiety of threonylcarbamoyl-AMP (TC-AMP) to the N6 group of A37, together with TsaE and TsaB. TsaD likely plays a direct catalytic role in this reaction. This chain is tRNA N6-adenosine threonylcarbamoyltransferase, found in Clostridioides difficile (strain 630) (Peptoclostridium difficile).